A 330-amino-acid chain; its full sequence is Cathepsin S (330 aa).

An N-terminal signal peptide occupies residues 1-17 (MKQLVCVLFVCSSAVTQ). The propeptide at 18–114 (LHKDPTLDHH…ITYKSNPNQM (97 aa)) is activation peptide. N-linked (GlcNAc...) asparagine glycosylation is present at Asn104. Disulfide bonds link Cys126–Cys223, Cys136–Cys179, Cys170–Cys212, and Cys271–Cys319. Cys139 is a catalytic residue. Residues His277 and Asn297 contribute to the active site.

The protein belongs to the peptidase C1 family.

It localises to the lysosome. Its subcellular location is the secreted. The protein resides in the cytoplasmic vesicle. It is found in the phagosome. The enzyme catalyses Similar to cathepsin L, but with much less activity on Z-Phe-Arg-|-NHMec, and more activity on the Z-Val-Val-Arg-|-Xaa compound.. Its function is as follows. Thiol protease. Key protease responsible for the removal of the invariant chain from MHC class II molecules and MHC class II antigen presentation. The bond-specificity of this proteinase is in part similar to the specificities of cathepsin L. The chain is Cathepsin S (CTSS) from Saimiri boliviensis boliviensis (Bolivian squirrel monkey).